An 82-amino-acid polypeptide reads, in one-letter code: U16-lycotoxin-Ls1b (82 aa).

Residues 1-22 form the signal peptide; sequence MSPKVQALLLLVGLITFLEVHA. Positions 23–34 are excised as a propeptide; the sequence is EEELSETVESER. Disulfide bonds link Cys-36-Cys-51, Cys-43-Cys-56, Cys-50-Cys-67, and Cys-58-Cys-65.

The protein belongs to the neurotoxin 02 (plectoxin) family. 04 (U16-lycotoxin) subfamily. As to expression, expressed by the venom gland.

The protein resides in the secreted. This chain is U16-lycotoxin-Ls1b, found in Lycosa singoriensis (Wolf spider).